A 119-amino-acid polypeptide reads, in one-letter code: Large ribosomal subunit protein bL20 (119 aa).

The protein belongs to the bacterial ribosomal protein bL20 family.

In terms of biological role, binds directly to 23S ribosomal RNA and is necessary for the in vitro assembly process of the 50S ribosomal subunit. It is not involved in the protein synthesizing functions of that subunit. The sequence is that of Large ribosomal subunit protein bL20 from Rhodospirillum centenum (strain ATCC 51521 / SW).